A 466-amino-acid polypeptide reads, in one-letter code: Uronate isomerase (466 aa).

It belongs to the metallo-dependent hydrolases superfamily. Uronate isomerase family.

It carries out the reaction D-glucuronate = D-fructuronate. The enzyme catalyses aldehydo-D-galacturonate = keto-D-tagaturonate. The protein operates within carbohydrate metabolism; pentose and glucuronate interconversion. In Brucella melitensis biotype 1 (strain ATCC 23456 / CCUG 17765 / NCTC 10094 / 16M), this protein is Uronate isomerase (uxaC).